Reading from the N-terminus, the 237-residue chain is Small ribosomal subunit protein uS17m (237 aa).

Belongs to the universal ribosomal protein uS17 family. As to quaternary structure, component of the mitochondrial small ribosomal subunit (mt-SSU). Mature yeast 74S mitochondrial ribosomes consist of a small (37S) and a large (54S) subunit. The 37S small subunit contains a 15S ribosomal RNA (15S mt-rRNA) and 34 different proteins. The 54S large subunit contains a 21S rRNA (21S mt-rRNA) and 46 different proteins.

It is found in the mitochondrion. In terms of biological role, component of the mitochondrial ribosome (mitoribosome), a dedicated translation machinery responsible for the synthesis of mitochondrial genome-encoded proteins, including at least some of the essential transmembrane subunits of the mitochondrial respiratory chain. The mitoribosomes are attached to the mitochondrial inner membrane and translation products are cotranslationally integrated into the membrane. uS17m may have a meiosis-specific role as it accumulates during the middle stage of sporulation. The sequence is that of Small ribosomal subunit protein uS17m (MRPS17) from Saccharomyces cerevisiae (strain ATCC 204508 / S288c) (Baker's yeast).